The sequence spans 139 residues: MTNDSASRTPSDNTELTEMQRYVTQQRGTEPAFSGKLLHNKRTGVYHCLCCQAPLFYSDSKYDSGCGWPSFDQPVSSEAVRYLEDDSHNMRRIEIRCGQCDAHLGHVFPDGPKTTGERYCVNSASLSFIDDVDGERVDG.

The MsrB domain occupies 9–131 (TPSDNTELTE…NSASLSFIDD (123 aa)). 4 residues coordinate Zn(2+): Cys48, Cys51, Cys97, and Cys100. Cys120 serves as the catalytic Nucleophile.

It belongs to the MsrB Met sulfoxide reductase family. The cofactor is Zn(2+).

The enzyme catalyses L-methionyl-[protein] + [thioredoxin]-disulfide + H2O = L-methionyl-(R)-S-oxide-[protein] + [thioredoxin]-dithiol. This chain is Peptide methionine sulfoxide reductase MsrB, found in Pectobacterium carotovorum subsp. carotovorum (strain PC1).